A 387-amino-acid polypeptide reads, in one-letter code: Exodeoxyribonuclease 7 large subunit (387 aa).

The protein belongs to the XseA family. Heterooligomer composed of large and small subunits.

The protein resides in the cytoplasm. It catalyses the reaction Exonucleolytic cleavage in either 5'- to 3'- or 3'- to 5'-direction to yield nucleoside 5'-phosphates.. Bidirectionally degrades single-stranded DNA into large acid-insoluble oligonucleotides, which are then degraded further into small acid-soluble oligonucleotides. This Synechococcus sp. (strain CC9605) protein is Exodeoxyribonuclease 7 large subunit.